Here is a 273-residue protein sequence, read N- to C-terminus: Ciliary microtubule inner protein 2B (273 aa).

2 disordered regions span residues threonine 59 to arginine 85 and arginine 123 to proline 164. The segment covering arginine 123–leucine 159 has biased composition (basic and acidic residues).

It belongs to the CIMIP2 family. As to quaternary structure, microtubule inner protein component of sperm flagellar doublet microtubules. Expressed in airway epithelial cells.

Its subcellular location is the cytoplasm. The protein localises to the cytoskeleton. The protein resides in the cilium axoneme. It is found in the flagellum axoneme. Microtubule inner protein (MIP) part of the dynein-decorated doublet microtubules (DMTs) in cilia axoneme, which is required for motile cilia beating. The protein is Ciliary microtubule inner protein 2B (Cimip2b) of Mus musculus (Mouse).